A 302-amino-acid polypeptide reads, in one-letter code: Probable WRKY transcription factor 40 (302 aa).

Positions 140-206 (DTTLVVKDGY…YEGEHNHPMP (67 aa)) form a DNA-binding region, WRKY.

Belongs to the WRKY group III family.

It localises to the nucleus. Transcription factor. Interacts specifically with the W box (5'-(T)TGAC[CT]-3'), a frequently occurring elicitor-responsive cis-acting element. This Arabidopsis thaliana (Mouse-ear cress) protein is Probable WRKY transcription factor 40.